The primary structure comprises 259 residues: Thiazole synthase (259 aa).

K99 serves as the catalytic Schiff-base intermediate with DXP. Residues G161, 187–188 (AG), and 209–210 (NT) contribute to the 1-deoxy-D-xylulose 5-phosphate site.

The protein belongs to the ThiG family. In terms of assembly, homotetramer. Forms heterodimers with either ThiH or ThiS.

Its subcellular location is the cytoplasm. It catalyses the reaction [ThiS sulfur-carrier protein]-C-terminal-Gly-aminoethanethioate + 2-iminoacetate + 1-deoxy-D-xylulose 5-phosphate = [ThiS sulfur-carrier protein]-C-terminal Gly-Gly + 2-[(2R,5Z)-2-carboxy-4-methylthiazol-5(2H)-ylidene]ethyl phosphate + 2 H2O + H(+). It functions in the pathway cofactor biosynthesis; thiamine diphosphate biosynthesis. Its function is as follows. Catalyzes the rearrangement of 1-deoxy-D-xylulose 5-phosphate (DXP) to produce the thiazole phosphate moiety of thiamine. Sulfur is provided by the thiocarboxylate moiety of the carrier protein ThiS. In vitro, sulfur can be provided by H(2)S. This chain is Thiazole synthase, found in Nitratiruptor sp. (strain SB155-2).